The sequence spans 165 residues: Nascent polypeptide-associated complex subunit beta (165 aa).

Residues 33 to 97 enclose the NAC-A/B domain; the sequence is TTDDKRLQST…PQTKKLQDIL (65 aa). The segment at 120-165 is disordered; the sequence is QKQAPGAGDVPATIQEEDDDDDVPDLVVGETFETPATEEAPKAAAS. A compositionally biased stretch (acidic residues) spans 134 to 143; that stretch reads QEEDDDDDVP. Over residues 144 to 165 the composition is skewed to low complexity; the sequence is DLVVGETFETPATEEAPKAAAS.

It belongs to the NAC-beta family. In terms of assembly, part of the nascent polypeptide-associated complex (NAC).

In Arabidopsis thaliana (Mouse-ear cress), this protein is Nascent polypeptide-associated complex subunit beta.